Here is a 96-residue protein sequence, read N- to C-terminus: UPF0235 protein ECA3630 (96 aa).

Belongs to the UPF0235 family.

The chain is UPF0235 protein ECA3630 from Pectobacterium atrosepticum (strain SCRI 1043 / ATCC BAA-672) (Erwinia carotovora subsp. atroseptica).